A 312-amino-acid chain; its full sequence is Ribosomal RNA small subunit methyltransferase H (312 aa).

S-adenosyl-L-methionine is bound by residues 33–35, aspartate 53, phenylalanine 80, aspartate 102, and glutamine 109; that span reads GGH.

The protein belongs to the methyltransferase superfamily. RsmH family.

It localises to the cytoplasm. It carries out the reaction cytidine(1402) in 16S rRNA + S-adenosyl-L-methionine = N(4)-methylcytidine(1402) in 16S rRNA + S-adenosyl-L-homocysteine + H(+). Specifically methylates the N4 position of cytidine in position 1402 (C1402) of 16S rRNA. This is Ribosomal RNA small subunit methyltransferase H from Heliobacterium mobile (Heliobacillus mobilis).